The sequence spans 147 residues: Cyanate hydratase (147 aa).

Residues Arg-88, Glu-91, and Ser-114 contribute to the active site.

This sequence belongs to the cyanase family.

It carries out the reaction cyanate + hydrogencarbonate + 3 H(+) = NH4(+) + 2 CO2. Its function is as follows. Catalyzes the reaction of cyanate with bicarbonate to produce ammonia and carbon dioxide. This is Cyanate hydratase from Polynucleobacter asymbioticus (strain DSM 18221 / CIP 109841 / QLW-P1DMWA-1) (Polynucleobacter necessarius subsp. asymbioticus).